A 393-amino-acid polypeptide reads, in one-letter code: MQTSHYAAEKDMQDAAPRLTFTLRDEERLMMKIGVFVPIGNNGWLISTHAPQYMPTFELNKAIVQKAEHYHFDFALSMIKLRGFGGKTEFWDHNLESFTLMAGLAAVTSRIQIYATAATLTLPPAIVARMAATIDSISGGRFGVNLVTGWQKPEYEQMGIWPGDDYFSRRYDYLTEYVQVLRDLWGSGKSDFKGDFFTMDDCRVSPQPSVPMKVICAGQSDAGMAFSARYADFNFCFGKGVNTPTAFAPTAARMKQAAEQTGRDVGSYVLFMVIADETDDAARAKWEHYKAGADEEALSWLTEQSQKDTRSGTDTNVRQMADPTSAVNINMGTLVGSYASVARMLDEVANVPGAEGVLLTFDDFLSGIETFGERIQPLMLCRAHLPALTQEVA.

Residues 79 to 80, N145, E154, 170 to 171, and S220 contribute to the FMN site; these read IK and RY.

Belongs to the NtaA/SnaA/DszA monooxygenase family. RutA subfamily.

The catalysed reaction is uracil + FMNH2 + NADH + O2 = (Z)-3-ureidoacrylate + FMN + NAD(+) + H2O + H(+). It carries out the reaction thymine + FMNH2 + NADH + O2 = (Z)-2-methylureidoacrylate + FMN + NAD(+) + H2O + H(+). Catalyzes the pyrimidine ring opening between N-3 and C-4 by an unusual flavin hydroperoxide-catalyzed mechanism, adding oxygen atoms in the process to yield ureidoacrylate peracid, that immediately reacts with FMN forming ureidoacrylate and FMN-N(5)-oxide. The FMN-N(5)-oxide reacts spontaneously with NADH to produce FMN. Requires the flavin reductase RutF to regenerate FMN in vivo. The chain is Pyrimidine monooxygenase RutA from Escherichia coli O6:H1 (strain CFT073 / ATCC 700928 / UPEC).